Here is a 469-residue protein sequence, read N- to C-terminus: Glutamate--tRNA ligase 1 (469 aa).

A 'HIGH' region motif is present at residues 11–21; it reads PSPTGHLHLGG. A 'KMSKS' region motif is present at residues 238 to 242; it reads KLSKR. Lys241 is an ATP binding site.

It belongs to the class-I aminoacyl-tRNA synthetase family. Glutamate--tRNA ligase type 1 subfamily. In terms of assembly, monomer.

Its subcellular location is the cytoplasm. The enzyme catalyses tRNA(Glu) + L-glutamate + ATP = L-glutamyl-tRNA(Glu) + AMP + diphosphate. Catalyzes the attachment of glutamate to tRNA(Glu) in a two-step reaction: glutamate is first activated by ATP to form Glu-AMP and then transferred to the acceptor end of tRNA(Glu). In Ehrlichia canis (strain Jake), this protein is Glutamate--tRNA ligase 1.